The chain runs to 165 residues: MAGRKEEELKDLTLLGNQGTTYSFTYNPNLLEVFDNKHPDRDYFVKFNCPEFTTLCPKTGQPDFATIYISYIPDKKCVESKSLKLYLFSFRNHGDFHEDCVNIIMNDLIKVMEPRYIEVWGKFTPRGGISIDPYCNWGRPGTKYEKMAEYRLLNHDLYPEKVDNR.

Catalysis depends on Cys56, which acts as the Thioimide intermediate. Residue Asp63 is the Proton donor of the active site. Residues 78–80 (VES) and 97–98 (HE) each bind substrate.

This sequence belongs to the GTP cyclohydrolase I family. QueF type 1 subfamily.

It localises to the cytoplasm. The enzyme catalyses 7-aminomethyl-7-carbaguanine + 2 NADP(+) = 7-cyano-7-deazaguanine + 2 NADPH + 3 H(+). Its pathway is tRNA modification; tRNA-queuosine biosynthesis. Is totally inhibited by 4-aminobenzylcyanide in vitro. Its function is as follows. Catalyzes the NADPH-dependent reduction of 7-cyano-7-deazaguanine (preQ0) to 7-aminomethyl-7-deazaguanine (preQ1), a late step in the queuosine pathway. Is highly specific for its natural substrate preQ0, since it cannot use various aliphatic, aromatic and heterocyclic nitriles, although it can reduce the substrate analog 5-cyanopyrrolo[2,3-d]pyrimidin-4-one with lesser efficiency. The protein is NADPH-dependent 7-cyano-7-deazaguanine reductase of Geobacillus kaustophilus (strain HTA426).